Consider the following 354-residue polypeptide: Alkanal monooxygenase alpha chain (354 aa).

The protein belongs to the bacterial luciferase oxidoreductase family. Heterodimer of an alpha and a beta chain.

It catalyses the reaction a long-chain fatty aldehyde + FMNH2 + O2 = a long-chain fatty acid + hnu + FMN + H2O + 2 H(+). Functionally, light-emitting reaction in luminous bacteria. This chain is Alkanal monooxygenase alpha chain (luxA), found in Photobacterium leiognathi.